A 208-amino-acid chain; its full sequence is Large ribosomal subunit protein uL4 (208 aa).

Positions 49–78 (HKAKTRAEVRGGGKKPFRQKGTGNARQGST) are disordered. A compositionally biased stretch (polar residues) spans 69–78 (GTGNARQGST).

This sequence belongs to the universal ribosomal protein uL4 family. In terms of assembly, part of the 50S ribosomal subunit.

Functionally, one of the primary rRNA binding proteins, this protein initially binds near the 5'-end of the 23S rRNA. It is important during the early stages of 50S assembly. It makes multiple contacts with different domains of the 23S rRNA in the assembled 50S subunit and ribosome. Forms part of the polypeptide exit tunnel. The protein is Large ribosomal subunit protein uL4 of Chlorobaculum tepidum (strain ATCC 49652 / DSM 12025 / NBRC 103806 / TLS) (Chlorobium tepidum).